The chain runs to 157 residues: Phosphopantetheine adenylyltransferase (157 aa).

A substrate-binding site is contributed by threonine 10. ATP is bound by residues 10–11 (TF) and histidine 18. Residues lysine 42, leucine 74, and arginine 88 each contribute to the substrate site. ATP is bound by residues 89–91 (GLR), glutamate 99, and 124–130 (NAFISSS).

It belongs to the bacterial CoaD family. In terms of assembly, homohexamer. Mg(2+) serves as cofactor.

Its subcellular location is the cytoplasm. It catalyses the reaction (R)-4'-phosphopantetheine + ATP + H(+) = 3'-dephospho-CoA + diphosphate. It participates in cofactor biosynthesis; coenzyme A biosynthesis; CoA from (R)-pantothenate: step 4/5. Functionally, reversibly transfers an adenylyl group from ATP to 4'-phosphopantetheine, yielding dephospho-CoA (dPCoA) and pyrophosphate. The sequence is that of Phosphopantetheine adenylyltransferase from Helicobacter pylori (strain P12).